The following is a 125-amino-acid chain: Immunoglobulin heavy variable 4-39 (125 aa).

Residues 1–26 (MDLMCKKMKHLWFFLLLVAAPRWVLS) form the signal peptide. Residues 27 to 51 (QLQLQESGPGLVKPSETLSLTCTVS) are framework-1. The Ig-like domain maps to 27–125 (QLQLQESGPG…ADTAVYYCAR (99 aa)). The cysteines at positions 48 and 123 are disulfide-linked. Residues 52–61 (GGSISSSSYY) are complementarity-determining-1. The segment at 62 to 78 (WGWIRQPPGKGLEWIGS) is framework-2. The interval 79-85 (IYYSGST) is complementarity-determining-2. Residues 86 to 123 (YYNPSLKSRVTISVDTSKNQFSLKLSSVTAADTAVYYC) form a framework-3 region. A complementarity-determining-3 region spans residues 124-125 (AR).

Immunoglobulins are composed of two identical heavy chains and two identical light chains; disulfide-linked.

It is found in the secreted. It localises to the cell membrane. Functionally, v region of the variable domain of immunoglobulin heavy chains that participates in the antigen recognition. Immunoglobulins, also known as antibodies, are membrane-bound or secreted glycoproteins produced by B lymphocytes. In the recognition phase of humoral immunity, the membrane-bound immunoglobulins serve as receptors which, upon binding of a specific antigen, trigger the clonal expansion and differentiation of B lymphocytes into immunoglobulins-secreting plasma cells. Secreted immunoglobulins mediate the effector phase of humoral immunity, which results in the elimination of bound antigens. The antigen binding site is formed by the variable domain of one heavy chain, together with that of its associated light chain. Thus, each immunoglobulin has two antigen binding sites with remarkable affinity for a particular antigen. The variable domains are assembled by a process called V-(D)-J rearrangement and can then be subjected to somatic hypermutations which, after exposure to antigen and selection, allow affinity maturation for a particular antigen. In Homo sapiens (Human), this protein is Immunoglobulin heavy variable 4-39.